A 499-amino-acid chain; its full sequence is Protein phosphatase PP2A 55 kDa regulatory subunit (499 aa).

The segment at 1 to 30 is disordered; that stretch reads MGRWGRQSPVLEPPDPQMQTTPPPPTLPPR. A compositionally biased stretch (pro residues) spans 11-28; it reads LEPPDPQMQTTPPPPTLP. 7 WD repeats span residues 79–118, 144–185, 228–266, 277–317, 336–374, 391–432, and 467–498; these read TDAD…KAAN, EIEE…KSFG, AHTY…QSYN, ELTE…LCDR, EIIS…KPIE, ENDC…DVTL, and DFNK…FQDK.

This sequence belongs to the phosphatase 2A regulatory subunit B family. In terms of assembly, PP2A exists in several trimeric forms, all of which consist of a core composed of a catalytic subunit associated with a 65 kDa regulatory subunit (PR65) (subunit A). The core complex associates with a third, variable subunit (subunit B), which confers distinct properties to the holoenzyme.

Could perform a substrate recognition function or could be responsible for targeting the enzyme complex to the appropriate subcellular compartment. The protein is Protein phosphatase PP2A 55 kDa regulatory subunit (tws) of Drosophila melanogaster (Fruit fly).